We begin with the raw amino-acid sequence, 72 residues long: U-actitoxin-Aeq5b (72 aa).

The N-terminal stretch at 1 to 20 (MNQVMTIFLVLGVIVYSVES) is a signal peptide. Intrachain disulfides connect cysteine 33–cysteine 71, cysteine 37–cysteine 66, cysteine 44–cysteine 59, and cysteine 50–cysteine 56.

Belongs to the Acrorhagin I family. In terms of tissue distribution, expressed by acrorhagi.

It is found in the secreted. The protein localises to the nematocyst. Its function is as follows. Toxin that is lethal to crab. It interacts with divalent metal ions (zinc and nickel) suggesting it may function as a metal ion chelator to regulate metal ion levels or as a metal ion transporter, or that its function is modulated by metal ions. Is not active against any of the voltage-gated potassium and sodium channels tested. In addition, it does not show activity in bacterial and fungal growth inhibitory assays as well as in hemolytic assays. In Actinia equina (Beadlet anemone), this protein is U-actitoxin-Aeq5b.